The primary structure comprises 599 residues: MALLKPFLSRTFSSFFATITGGRNLIDSIEELITTNYWLIFVMIIVCTCSAPSNGAFFLNDPYGYPFVSLQDDSIESVSATTITTTTIISTIITTTTATQRIFQEKAKTFGQSAEEIQKVKYYLEKIQKFEAKQHPEEIRQQHTTKNSEAIKDDLQIAVEVAKFEKRQKDSITLNPEENGQYYEGDIVLDAQQAHEIYESMIQHGRRTKRKFIRSELRRWDSHKPIIYSFDGSHTIREQRVIELALEHWHNITCLNFERRDDEIQENRIVFTDVDGCASNVGRHPLGEPQFVSLAPECIRLGVIAHEVAHALGFWHEQSRPDRDNYVTVRWENIDRDSKGQFLKELPTDVDNGDVPYDYGSIMHYRSKAFGRYEDLFTLNTNIMDYQKTIGQRDQLSFNDIRLMNVIYCSDSCAQKLPCQRGGYTDPRRCGRCRCPDGFTGKLCERIMPGFGADCGGRIELTSSWKRITSPNYPRDFKEGQECSWLLVAPPGQRVQLRFYGEFEMYCKVRHSLCMDYIEIRNSTDFANTGMRYCCYGTPKSSIMSATEDMLVLFRSFYRGGKGFQAQVRALPTTVFNIRTVRSMDEFNANLNKHAVADS.

The N-terminal stretch at 1-22 (MALLKPFLSRTFSSFFATITGG) is a signal peptide. A propeptide spanning residues 23–211 (RNLIDSIEEL…IQHGRRTKRK (189 aa)) is cleaved from the precursor. Residues 211–410 (KFIRSELRRW…IRLMNVIYCS (200 aa)) enclose the Peptidase M12A domain. An N-linked (GlcNAc...) asparagine glycan is attached at Asn-251. Disulfide bonds link Cys-254–Cys-409, Cys-277–Cys-298, Cys-413–Cys-433, Cys-435–Cys-444, and Cys-455–Cys-483. A Zn(2+)-binding site is contributed by His-306. Residue Glu-307 is part of the active site. Residues His-310 and His-316 each coordinate Zn(2+). Positions 405–445 (NVIYCSDSCAQKLPCQRGGYTDPRRCGRCRCPDGFTGKLCE) constitute an EGF-like domain. A CUB domain is found at 455-571 (CGGRIELTSS…KGFQAQVRAL (117 aa)). Asn-522 carries N-linked (GlcNAc...) asparagine glycosylation.

The cofactor is Zn(2+).

Its subcellular location is the secreted. Its activity is regulated as follows. Inhibited by marimastat and tripeptide hydroxamic acids. Metalloprotease which cleaves the carboxyl terminus of procollagens to mature collagens. Probably involved in cuticular collagen maturation. The polypeptide is Zinc metalloproteinase dpy-31 (Brugia malayi (Filarial nematode worm)).